A 103-amino-acid polypeptide reads, in one-letter code: ATP synthase F(0) complex subunit g, mitochondrial (103 aa).

Alanine 2 is modified (N-acetylalanine). Lysine 11, lysine 24, and lysine 54 each carry N6-acetyllysine.

Belongs to the ATPase g subunit family. As to quaternary structure, component of the ATP synthase complex composed at least of ATP5F1A/subunit alpha, ATP5F1B/subunit beta, ATP5MC1/subunit c (homooctomer), MT-ATP6/subunit a, MT-ATP8/subunit 8, ATP5ME/subunit e, ATP5MF/subunit f, ATP5MG/subunit g, ATP5MK/subunit k, ATP5MJ/subunit j, ATP5F1C/subunit gamma, ATP5F1D/subunit delta, ATP5F1E/subunit epsilon, ATP5PF/subunit F6, ATP5PB/subunit b, ATP5PD/subunit d, ATP5PO/subunit OSCP. ATP synthase complex consists of a soluble F(1) head domain (subunits alpha(3) and beta(3)) - the catalytic core - and a membrane F(0) domain - the membrane proton channel (subunits c, a, 8, e, f, g, k and j). These two domains are linked by a central stalk (subunits gamma, delta, and epsilon) rotating inside the F1 region and a stationary peripheral stalk (subunits F6, b, d, and OSCP).

It localises to the mitochondrion. The protein localises to the mitochondrion inner membrane. Functionally, subunit g, of the mitochondrial membrane ATP synthase complex (F(1)F(0) ATP synthase or Complex V) that produces ATP from ADP in the presence of a proton gradient across the membrane which is generated by electron transport complexes of the respiratory chain. ATP synthase complex consist of a soluble F(1) head domain - the catalytic core - and a membrane F(1) domain - the membrane proton channel. These two domains are linked by a central stalk rotating inside the F(1) region and a stationary peripheral stalk. During catalysis, ATP synthesis in the catalytic domain of F(1) is coupled via a rotary mechanism of the central stalk subunits to proton translocation. In vivo, can only synthesize ATP although its ATP hydrolase activity can be activated artificially in vitro. Part of the complex F(0) domain. This Rattus norvegicus (Rat) protein is ATP synthase F(0) complex subunit g, mitochondrial.